The following is a 138-amino-acid chain: MAALPDKERLLRNFQRCANWEEKYLYIIELGQRLAELNEQDRHSENSIQGCQSQVWIVMRQNADGVIELQGDSDAAIVKGLIAIVFILYHQMTPQDIVNFDVRPWFEKMALTQHLTPSRSQGLEAMIRAIRARAATLS.

The active-site Cysteine persulfide intermediate is Cys-51.

The protein belongs to the SufE family. As to quaternary structure, homodimer. Interacts with SufS.

It localises to the cytoplasm. It participates in cofactor biosynthesis; iron-sulfur cluster biosynthesis. Functionally, participates in cysteine desulfuration mediated by SufS. Cysteine desulfuration mobilizes sulfur from L-cysteine to yield L-alanine and constitutes an essential step in sulfur metabolism for biosynthesis of a variety of sulfur-containing biomolecules. Functions as a sulfur acceptor for SufS, by mediating the direct transfer of the sulfur atom from the S-sulfanylcysteine of SufS, an intermediate product of cysteine desulfuration process. This is Cysteine desulfuration protein SufE from Citrobacter koseri (strain ATCC BAA-895 / CDC 4225-83 / SGSC4696).